The chain runs to 286 residues: Phosphatidylserine decarboxylase proenzyme (286 aa).

Active-site charge relay system; for autoendoproteolytic cleavage activity residues include aspartate 89, histidine 146, and serine 252. Residue serine 252 is the Schiff-base intermediate with substrate; via pyruvic acid; for decarboxylase activity of the active site. Serine 252 carries the pyruvic acid (Ser); by autocatalysis modification.

This sequence belongs to the phosphatidylserine decarboxylase family. PSD-B subfamily. Prokaryotic type I sub-subfamily. Heterodimer of a large membrane-associated beta subunit and a small pyruvoyl-containing alpha subunit. The cofactor is pyruvate. Post-translationally, is synthesized initially as an inactive proenzyme. Formation of the active enzyme involves a self-maturation process in which the active site pyruvoyl group is generated from an internal serine residue via an autocatalytic post-translational modification. Two non-identical subunits are generated from the proenzyme in this reaction, and the pyruvate is formed at the N-terminus of the alpha chain, which is derived from the carboxyl end of the proenzyme. The autoendoproteolytic cleavage occurs by a canonical serine protease mechanism, in which the side chain hydroxyl group of the serine supplies its oxygen atom to form the C-terminus of the beta chain, while the remainder of the serine residue undergoes an oxidative deamination to produce ammonia and the pyruvoyl prosthetic group on the alpha chain. During this reaction, the Ser that is part of the protease active site of the proenzyme becomes the pyruvoyl prosthetic group, which constitutes an essential element of the active site of the mature decarboxylase.

It is found in the cell membrane. The catalysed reaction is a 1,2-diacyl-sn-glycero-3-phospho-L-serine + H(+) = a 1,2-diacyl-sn-glycero-3-phosphoethanolamine + CO2. It functions in the pathway phospholipid metabolism; phosphatidylethanolamine biosynthesis; phosphatidylethanolamine from CDP-diacylglycerol: step 2/2. Functionally, catalyzes the formation of phosphatidylethanolamine (PtdEtn) from phosphatidylserine (PtdSer). This Shewanella loihica (strain ATCC BAA-1088 / PV-4) protein is Phosphatidylserine decarboxylase proenzyme.